Here is a 448-residue protein sequence, read N- to C-terminus: Beta-alanine--pyruvate aminotransferase (448 aa).

A substrate-binding site is contributed by tryptophan 61. Residue 120 to 121 (GS) participates in pyridoxal 5'-phosphate binding. An N6-(pyridoxal phosphate)lysine modification is found at lysine 288. Threonine 327 lines the pyridoxal 5'-phosphate pocket. Substrate is bound by residues arginine 414 and glutamine 421.

It belongs to the class-III pyridoxal-phosphate-dependent aminotransferase family. In terms of assembly, homotetramer. Pyridoxal 5'-phosphate serves as cofactor.

It catalyses the reaction 3-oxopropanoate + L-alanine = beta-alanine + pyruvate. Inhibited by gabaculine (5-amino-1,3-cyclohexadienylcarboxylic acid). Its function is as follows. Involved in the degradation of beta-alanine. Catalyzes the transfer of the amino group from beta-alanine to pyruvate to yield L-alanine and 3-oxopropanoate. It can also accept both 4-aminobutyrate and (S)-alpha-methylbenzylamine (MBA) as amino-group donors in the presence of pyruvate as an amine acceptor. In Pseudomonas aeruginosa (strain ATCC 15692 / DSM 22644 / CIP 104116 / JCM 14847 / LMG 12228 / 1C / PRS 101 / PAO1), this protein is Beta-alanine--pyruvate aminotransferase (bauA).